Here is a 71-residue protein sequence, read N- to C-terminus: UPF0346 protein MGAS2096_Spy0401 (71 aa).

This sequence belongs to the UPF0346 family.

The polypeptide is UPF0346 protein MGAS2096_Spy0401 (Streptococcus pyogenes serotype M12 (strain MGAS2096)).